A 439-amino-acid chain; its full sequence is NAD kinase (439 aa).

Phosphoserine is present on residues Ser-46, Ser-48, Ser-50, Ser-55, and Ser-64.

This sequence belongs to the NAD kinase family. It depends on a divalent metal cation as a cofactor.

It carries out the reaction NAD(+) + ATP = ADP + NADP(+) + H(+). This Mus musculus (Mouse) protein is NAD kinase (Nadk).